We begin with the raw amino-acid sequence, 316 residues long: GTP cyclohydrolase FolE2 2 (316 aa).

Belongs to the GTP cyclohydrolase IV family.

The catalysed reaction is GTP + H2O = 7,8-dihydroneopterin 3'-triphosphate + formate + H(+). It participates in cofactor biosynthesis; 7,8-dihydroneopterin triphosphate biosynthesis; 7,8-dihydroneopterin triphosphate from GTP: step 1/1. Converts GTP to 7,8-dihydroneopterin triphosphate. This Burkholderia orbicola (strain MC0-3) protein is GTP cyclohydrolase FolE2 2.